Consider the following 143-residue polypeptide: Ribonuclease HI (143 aa).

The 136-residue stretch at 1-136 folds into the RNase H type-1 domain; the sequence is MQEIEIFCDG…CDSLAKLEAQ (136 aa). Residues Asp-9, Glu-47, Asp-69, and Asp-128 each contribute to the Mg(2+) site.

This sequence belongs to the RNase H family. Monomer. It depends on Mg(2+) as a cofactor.

It localises to the cytoplasm. It carries out the reaction Endonucleolytic cleavage to 5'-phosphomonoester.. Its function is as follows. Endonuclease that specifically degrades the RNA of RNA-DNA hybrids. This is Ribonuclease HI (rnhA) from Helicobacter pylori (strain ATCC 700392 / 26695) (Campylobacter pylori).